Here is a 429-residue protein sequence, read N- to C-terminus: Adenylosuccinate synthetase (429 aa).

GTP is bound by residues 12 to 18 and 40 to 42; these read GDEGKGK and GHT. Asp-13 acts as the Proton acceptor in catalysis. Mg(2+) contacts are provided by Asp-13 and Gly-40. IMP is bound by residues 13-16, 38-41, Thr-129, Arg-143, Gln-223, Thr-238, and Arg-302; these read DEGK and NAGH. His-41 (proton donor) is an active-site residue. Position 298–304 (298–304) interacts with substrate; the sequence is VVTGRKR. GTP contacts are provided by residues Arg-304, 330–332, and 412–414; these read KLD and STS.

The protein belongs to the adenylosuccinate synthetase family. In terms of assembly, homodimer. Mg(2+) is required as a cofactor.

The protein resides in the cytoplasm. The enzyme catalyses IMP + L-aspartate + GTP = N(6)-(1,2-dicarboxyethyl)-AMP + GDP + phosphate + 2 H(+). The protein operates within purine metabolism; AMP biosynthesis via de novo pathway; AMP from IMP: step 1/2. Its function is as follows. Plays an important role in the de novo pathway of purine nucleotide biosynthesis. Catalyzes the first committed step in the biosynthesis of AMP from IMP. The protein is Adenylosuccinate synthetase of Brucella abortus (strain 2308).